The primary structure comprises 367 residues: Gelsolin-like protein 1 (367 aa).

Residues 1 to 185 are actin binding; sequence MATGLIKAKE…GQKQQIYVHE (185 aa). Gelsolin-like repeat units lie at residues 56–141 and 179–225; these read NFKV…ELFR and QQIY…KAMQ. The interval 106–109 is actin-actin interfilament contact point; that stretch reads DEYG. Residues 186-295 form an actin binding, Actin-severing region; sequence VPLVKERLDH…LKTTEVKRGA (110 aa). A disordered region spans residues 235 to 257; sequence PKAEAETLEDESTPESHKFYTSL. A Gelsolin-like 3 repeat occupies 287–322; sequence KTTEVKRGAVNSKDFSSNDVFILDTGDQCFVWVGKG. Residues 296 to 366 form an actin-severing, Ca-sensitive region; the sequence is VNSKDFSSND…LCKAFNVAIA (71 aa).

Belongs to the villin/gelsolin family. In terms of assembly, interacts with actin monomers and filaments. Expressed in circular and longitudinal muscle, pseudohearts, pharynx and gizzard. Also expressed in male germ cells at the proximal pole of primary spermatocytes in 16 cell-stage morulae, and in the distal parts of the spermatocytes in 32 and 64 cell-stage morulae. In the spermatids of the 128 cell-stage morulae it is expressed at the proximal pole of the elongated nucleus and the distal pole near the base of the flagellae.

Its subcellular location is the cytoplasm. The protein localises to the cytoskeleton. Functionally, calcium-regulated protein that binds to the plus (or barbed) ends of actin monomers or filaments, preventing monomer exchange (end-blocking or capping). Can promote the assembly of monomers into filaments (nucleation) as well as sever existing filaments. In Lumbricus terrestris (Common earthworm), this protein is Gelsolin-like protein 1.